A 502-amino-acid chain; its full sequence is N-fatty-acyl-amino acid synthase/hydrolase PM20D1 (502 aa).

Residues 1-25 form the signal peptide; sequence MAQRCVCVLALVAMLLLVFPTVSRS. Residue histidine 125 participates in Zn(2+) binding. The active site involves aspartate 127. Residue aspartate 157 coordinates Zn(2+). Glutamate 191 acts as the Proton acceptor in catalysis. Glutamate 192 and aspartate 217 together coordinate Zn(2+). Asparagine 252 carries an N-linked (GlcNAc...) asparagine glycan. Zn(2+) is bound at residue histidine 464.

This sequence belongs to the peptidase M20A family. Requires Zn(2+) as cofactor.

Its subcellular location is the secreted. The enzyme catalyses an N-acyl-L-amino acid + H2O = an L-alpha-amino acid + a carboxylate. The catalysed reaction is an N-acyl-aromatic L-alpha-amino acid + H2O = an aromatic L-alpha-amino acid + a carboxylate. It carries out the reaction L-phenylalanine + (9Z)-octadecenoate = N-(9Z-octadecenoyl)-L-phenylalanine + H2O. It catalyses the reaction N-(9Z-octadecenoyl)-L-leucine + H2O = L-leucine + (9Z)-octadecenoate. The enzyme catalyses N-(5Z,8Z,11Z,14Z)-eicosatetraenoyl-glycine + H2O = (5Z,8Z,11Z,14Z)-eicosatetraenoate + glycine. The catalysed reaction is N-hexadecanoyl-L-phenylalanine + H2O = hexadecanoate + L-phenylalanine. It carries out the reaction N-octadecanoyl-L-phenylalanine + H2O = octadecanoate + L-phenylalanine. It catalyses the reaction N-(4Z,7Z,10Z,13Z,16Z,19Z-docosahexaenoyl)-L-phenylalanine + H2O = (4Z,7Z,10Z,13Z,16Z,19Z)-docosahexaenoate + L-phenylalanine. The enzyme catalyses N-(9Z-octadecenoyl)-L-asparagine + H2O = L-asparagine + (9Z)-octadecenoate. The catalysed reaction is (9Z)-octadecenoate + glycine = N-(9Z-octadecenoyl)glycine + H2O. It carries out the reaction N-(9Z-octadecenoyl)-L-lysine + H2O = L-lysine + (9Z)-octadecenoate. It catalyses the reaction N-(9Z-octadecenoyl)-L-methionine + H2O = (9Z)-octadecenoate + L-methionine. The enzyme catalyses N-(9Z-octadecenoyl)-L-serine + H2O = L-serine + (9Z)-octadecenoate. The catalysed reaction is N-(9Z-octadecenoyl)-L-tryptophan + H2O = L-tryptophan + (9Z)-octadecenoate. It carries out the reaction N-(9Z-octadecenoyl)-L-tyrosine + H2O = L-tyrosine + (9Z)-octadecenoate. It catalyses the reaction N-(9Z-octadecenoyl)-L-glutamine + H2O = L-glutamine + (9Z)-octadecenoate. The enzyme catalyses N-(5Z,8Z,11Z,14Z-eicosatetraenoyl)-L-serine + H2O = (5Z,8Z,11Z,14Z)-eicosatetraenoate + L-serine. The catalysed reaction is (5Z,8Z,11Z,14Z)-eicosatetraenoate + L-phenylalanine = N-(5Z,8Z,11Z,14Z-eicosatetraenoyl)-L-phenylalanine + H2O. The protein operates within amino-acid metabolism. Its pathway is energy metabolism. It functions in the pathway lipid metabolism; fatty acid metabolism. Its activity is regulated as follows. Lipoproteins are powerful coactivators of PM20D1 activity in vitro and NAA biosynthesis in vivo. In terms of biological role, secreted enzyme that regulates the endogenous N-fatty acyl amino acid (NAAs) tissue and circulating levels by functioning as a bidirectional NAA synthase/hydrolase. It condenses free fatty acids and free amino acids to generate NAAs and bidirectionally catalyzes the reverse hydrolysis reaction. Some of these NAAs stimulate oxidative metabolism via mitochondrial uncoupling, increasing energy expenditure in a UPC1-independent manner. Thereby, this secreted protein may indirectly regulate whole body energy expenditure. PM20D1 circulates in tight association with both low- and high-density (LDL and HDL,respectively) lipoprotein particles. This chain is N-fatty-acyl-amino acid synthase/hydrolase PM20D1, found in Homo sapiens (Human).